The primary structure comprises 292 residues: MHNLRNILFVITLIGQKYGLTSSQNKELCDVTSSTGLLDSIKVMASHVKEQLKDKGTSEVAQPIVSPDPTDCADILLNGYRSSGGYRIWPKSWMTVGTLNVYCDMETDGGGWTVIQRRGNYGNPSDYFYKPWKNYKLGFGNIEKDFWLGNDRIFALTNQRNYMIRFDLKDKENDTRYAIYQDFWIENEDYLYCLHIGNYSGDAGNSFGRHNGHNFSTIDKDHDTHETHCAQTYKGGWWYDRCHESNLNGLYLNGEHNSYADGIEWRAWKGYHYSLPQVEMKIRPVEFNIIGN.

The N-terminal stretch at Met-1 to Ser-23 is a signal peptide. Gln-24 is modified (pyrrolidone carboxylic acid). The region spanning Pro-63–Glu-286 is the Fibrinogen C-terminal domain. An intrachain disulfide couples Cys-72 to Cys-103. N-linked (GlcNAc...) asparagine glycans are attached at residues Asn-173, Asn-198, and Asn-214. Positions 221, 225, and 227 each coordinate Ca(2+). Cys-229 and Cys-242 are oxidised to a cystine.

As to quaternary structure, multimeric. PubMed:10468566 and PubMed:11707569 are in disagreement about the nature of the multimer, PubMed:10468566 finds hexamers and octamers, the results in PubMed:11707569 suggest tetramers. Strongly expressed in heart and intestine, weakly expressed in hepatopancreas. Not found in hemocytes, stomach, nervous tissue or skeletal muscle.

It localises to the secreted. Functionally, lectin involved in innate immunity. Agglutinates all types of human erythrocytes, Gram-positive and Gram-negative bacteria. Has a stronger agglutinating activity towards Gram-negative bacteria than towards Gram-positive bacteria. Specifically recognizes acetyl group-containing substances on agglutinated cells. The hemagglutinating activity was inhibited by EDTA, acetyl group-containing mono- and disaccharides, N-acetyl derivatives of amino acids, other acetyl group-containing substances, propionamide and benzamide. Enhances the antimicrobial activity of big defensin against Gram-positive bacteria but not against Gram-negative bacteria. The chain is Techylectin-5A from Tachypleus tridentatus (Japanese horseshoe crab).